We begin with the raw amino-acid sequence, 592 residues long: Protein US23 (592 aa).

The segment at 407–491 is disordered; that stretch reads PRSLGDGEEE…NNVVPNVDRR (85 aa). Acidic residues predominate over residues 460–481; the sequence is ADDEEQGEDDDDSGAEPMEPEE.

Belongs to the herpesviridae US22 family.

The protein localises to the virion tegument. The chain is Protein US23 (US23) from Homo sapiens (Human).